We begin with the raw amino-acid sequence, 547 residues long: Sodium-coupled neutral amino acid transporter 4 (547 aa).

The tract at residues 1 to 34 (MDPMELNNVSIEPDGDSCSGDSIQDSYTGMENSD) is disordered. Topologically, residues 1–104 (MDPMELNNVS…GLSYAMANTG (104 aa)) are extracellular. A compositionally biased stretch (polar residues) spans 19–31 (SGDSIQDSYTGME). Ser-49 is modified (phosphoserine). A helical transmembrane segment spans residues 105 to 125 (IILFIIMLLTVAILSLYSVHL). Residues 126 to 151 (LLKTAKEGGSLIYEKLGEKAFGWPGK) are Cytoplasmic-facing. The helical transmembrane segment at 152-172 (IGAFISITMQNIGAMSSYLFI) threads the bilayer. At 173–195 (IKYELPEVIRAFMGLEENTGEWY) the chain is on the extracellular side. The helical transmembrane segment at 196-216 (LNGNYLVLFVSVGIILPLSLL) threads the bilayer. Residues 217–220 (KNLG) lie on the Cytoplasmic side of the membrane. Residues 221–241 (YLGYTSGFSLSCMVFFVSVVI) form a helical membrane-spanning segment. Over 242–332 (YKKFQIPCPL…PKYFVFNSRT (91 aa)) the chain is Extracellular. Cys-249 and Cys-321 form a disulfide bridge. Asn-260, Asn-264, and Asn-276 each carry an N-linked (GlcNAc...) asparagine glycan. A helical transmembrane segment spans residues 333–353 (AYAIPILAFAFVCHPEVLPIY). Residues 354 to 369 (SELKDRSRRKMQTVSN) lie on the Cytoplasmic side of the membrane. Residues 370 to 390 (ISISGMLVMYLLAALFGYLSF) traverse the membrane as a helical segment. Topologically, residues 391–411 (YGDVEDELLHAYSKVYTFDTA) are extracellular. The chain crosses the membrane as a helical span at residues 412 to 432 (LLMVRLAVLVAVTLTVPIVLF). The Cytoplasmic portion of the chain corresponds to 433 to 453 (PIRTSVITLLFPRKPFSWLKH). The chain crosses the membrane as a helical span at residues 454-474 (FGIAAIIIALNNILVILVPTI). The Extracellular segment spans residues 475–476 (KY). A helical membrane pass occupies residues 477–497 (IFGFIGASSATMLIFILPAAF). Residues 498 to 514 (YLKLVKKEPLRSPQKIG) lie on the Cytoplasmic side of the membrane. A helical membrane pass occupies residues 515–535 (ALVFLVTGIIFMMGSMALIIL). At 536–547 (DWIYNPPNPNHH) the chain is on the extracellular side.

It belongs to the amino acid/polyamine transporter 2 family. Post-translationally, the disulfide bond plays an important role in substrate transport, but has no effect on trafficking to the cell surface. Detected in liver, in hepatocytes surrounding the central vein. Not detected in heart, kidney, brain, lung, small intestine, spleen and thymus. Highly expressed in placenta.

It is found in the cell membrane. It localises to the cell projection. Its subcellular location is the microvillus membrane. The catalysed reaction is L-alanine(in) + Na(+)(in) = L-alanine(out) + Na(+)(out). The enzyme catalyses L-methionine(in) + Na(+)(in) = L-methionine(out) + Na(+)(out). It carries out the reaction L-asparagine(in) + Na(+)(in) = L-asparagine(out) + Na(+)(out). It catalyses the reaction L-threonine(in) + Na(+)(in) = L-threonine(out) + Na(+)(out). The catalysed reaction is L-serine(in) + Na(+)(in) = L-serine(out) + Na(+)(out). The enzyme catalyses glycine(in) + Na(+)(in) = glycine(out) + Na(+)(out). It carries out the reaction L-glutamine(in) + Na(+)(in) = L-glutamine(out) + Na(+)(out). It catalyses the reaction L-histidine(in) + Na(+)(in) = L-histidine(out) + Na(+)(out). The catalysed reaction is L-cysteine(in) + Na(+)(in) = L-cysteine(out) + Na(+)(out). The enzyme catalyses L-proline(in) + Na(+)(in) = L-proline(out) + Na(+)(out). Symporter that cotransports neutral amino acids and sodium ions from the extraccellular to the intracellular side of the cell membrane. The transport is electrogenic, pH dependent and partially tolerates substitution of Na(+) by Li(+). Preferentially transports smaller amino acids, such as glycine, L-alanine, L-serine, L-asparagine and L-threonine, followed by L-cysteine, L-histidine, L-proline and L-glutamine and L-methionine. The protein is Sodium-coupled neutral amino acid transporter 4 of Mus musculus (Mouse).